Reading from the N-terminus, the 192-residue chain is Probable GTP-binding protein EngB (192 aa).

The 171-residue stretch at 22–192 (GRPEIVFVGR…LLERLDLFSQ (171 aa)) folds into the EngB-type G domain. Residues 30 to 37 (GRSNVGKS), 57 to 61 (GKTRL), 75 to 78 (DLPG), 142 to 145 (TKWD), and 172 to 174 (YSS) each bind GTP. Serine 37 and threonine 59 together coordinate Mg(2+).

Belongs to the TRAFAC class TrmE-Era-EngA-EngB-Septin-like GTPase superfamily. EngB GTPase family. It depends on Mg(2+) as a cofactor.

In terms of biological role, necessary for normal cell division and for the maintenance of normal septation. The polypeptide is Probable GTP-binding protein EngB (Chlorobaculum parvum (strain DSM 263 / NCIMB 8327) (Chlorobium vibrioforme subsp. thiosulfatophilum)).